A 221-amino-acid polypeptide reads, in one-letter code: Translation initiation factor 6 (221 aa).

Belongs to the eIF-6 family.

Binds to the 50S ribosomal subunit and prevents its association with the 30S ribosomal subunit to form the 70S initiation complex. This chain is Translation initiation factor 6, found in Cenarchaeum symbiosum (strain A).